The primary structure comprises 435 residues: Protein phosphatase 2C homolog 2 (435 aa).

The region spanning 23–298 (IYGVSAMQGW…DNMTMIIIGL (276 aa)) is the PPM-type phosphatase domain. Mn(2+) contacts are provided by aspartate 71, glycine 72, aspartate 240, and aspartate 289. Positions 366-435 (DQTEEDRDLP…TSGAPEKSTS (70 aa)) are disordered. Residues 381 to 392 (ELPDSARNEREG) are compositionally biased toward basic and acidic residues. Residues 409–418 (GSSASTSEST) show a composition bias toward low complexity. Positions 419–435 (VTPAGSSTSGAPEKSTS) are enriched in polar residues.

Belongs to the PP2C family. The cofactor is Mg(2+). Mn(2+) serves as cofactor.

Its subcellular location is the cytoplasm. The protein resides in the nucleus. The catalysed reaction is O-phospho-L-seryl-[protein] + H2O = L-seryl-[protein] + phosphate. It catalyses the reaction O-phospho-L-threonyl-[protein] + H2O = L-threonyl-[protein] + phosphate. Functionally, dephosphorylating regulator for many key proteins. Dephosphorylates phosphoglycerate kinase pgk1 at least on 'Ser-203' to negatively regulate targeting of pgk1 to the mitochondrion, thereby negatively regulating production of acetyl-CoA and consequently aflatoxin biosynthesis. The chain is Protein phosphatase 2C homolog 2 from Aspergillus flavus (strain ATCC 200026 / FGSC A1120 / IAM 13836 / NRRL 3357 / JCM 12722 / SRRC 167).